A 278-amino-acid chain; its full sequence is FALAHMVNDFDIMKSYLDEGANGIETDITFSPEGEPESAFHGVPCDCKRWCDRTVSFDSYLQKTSDLSTPGHPDYRENLLIIILDLKLNGLSQDALANGGRRLADKLAAHFWTVGRRDQRATFVVSVPQTSQKVFMKTFREGMEAIGMGDMNAKVGFDFTDNGDVSVTKAVYDELGITEHIWASDGITNCVALLFRGTSRLEELIQKRDEGESTYISKVYAWTYDKETSVVLALELGVDGVMTNYADFVISILNKPEHSSKYRLATYEDDPFERFKAV.

Residue H5 is part of the active site. Mg(2+) contacts are provided by E25 and D27. Residue H41 is the Nucleophile of the active site. 2 disulfide bridges follow: C45/C51 and C47/C190. Residue D85 participates in Mg(2+) binding.

The protein belongs to the arthropod phospholipase D family. Class II subfamily. Mg(2+) serves as cofactor. Expressed by the venom gland.

It is found in the secreted. The enzyme catalyses an N-(acyl)-sphingosylphosphocholine = an N-(acyl)-sphingosyl-1,3-cyclic phosphate + choline. It carries out the reaction an N-(acyl)-sphingosylphosphoethanolamine = an N-(acyl)-sphingosyl-1,3-cyclic phosphate + ethanolamine. The catalysed reaction is a 1-acyl-sn-glycero-3-phosphocholine = a 1-acyl-sn-glycero-2,3-cyclic phosphate + choline. It catalyses the reaction a 1-acyl-sn-glycero-3-phosphoethanolamine = a 1-acyl-sn-glycero-2,3-cyclic phosphate + ethanolamine. Functionally, dermonecrotic toxins cleave the phosphodiester linkage between the phosphate and headgroup of certain phospholipids (sphingolipid and lysolipid substrates), forming an alcohol (often choline) and a cyclic phosphate. This toxin acts on sphingomyelin (SM). It may also act on ceramide phosphoethanolamine (CPE), lysophosphatidylcholine (LPC) and lysophosphatidylethanolamine (LPE), but not on lysophosphatidylserine (LPS), and lysophosphatidylglycerol (LPG). It acts by transphosphatidylation, releasing exclusively cyclic phosphate products as second products. Induces dermonecrosis, hemolysis, increased vascular permeability, edema, inflammatory response, and platelet aggregation. In Loxosceles spinulosa (Recluse spider), this protein is Dermonecrotic toxin LspiSicTox-betaIE2iii.